The primary structure comprises 345 residues: Heat-inducible transcription repressor HrcA (345 aa).

This sequence belongs to the HrcA family.

Its function is as follows. Negative regulator of class I heat shock genes (grpE-dnaK-dnaJ and groELS operons). Prevents heat-shock induction of these operons. This is Heat-inducible transcription repressor HrcA from Listeria monocytogenes serotype 1/2a (strain 10403S).